The primary structure comprises 330 residues: Phenylalanine--tRNA ligase alpha subunit (330 aa).

Glutamate 255 contributes to the Mg(2+) binding site.

Belongs to the class-II aminoacyl-tRNA synthetase family. Phe-tRNA synthetase alpha subunit type 1 subfamily. Tetramer of two alpha and two beta subunits. Mg(2+) serves as cofactor.

The protein localises to the cytoplasm. The catalysed reaction is tRNA(Phe) + L-phenylalanine + ATP = L-phenylalanyl-tRNA(Phe) + AMP + diphosphate + H(+). In Acinetobacter baumannii (strain SDF), this protein is Phenylalanine--tRNA ligase alpha subunit.